A 173-amino-acid chain; its full sequence is Lens fiber membrane intrinsic protein (173 aa).

At 1-3 (MYS) the chain is on the cytoplasmic side. A helical membrane pass occupies residues 4–24 (FMGGGLFCAWVGTILLVVAMA). Topologically, residues 25-66 (TDHWMQYRLSGSFAHQGLWRYCLGNKCYLQTDSIAYWNATRA) are extracellular. C-linked (Man) tryptophan glycosylation is found at W43 and W61. N62 is a glycosylation site (N-linked (GlcNAc...) asparagine). A helical membrane pass occupies residues 67–87 (FMILSALCAISGIIMGIMAFA). Residues 88–98 (HQPTFSRISRP) lie on the Cytoplasmic side of the membrane. A helical transmembrane segment spans residues 99–119 (FSAGIMFFSSTLFVVLALAIY). At 120–140 (TGVTVSFLGRRFGDWRFSWSY) the chain is on the extracellular side. The helical transmembrane segment at 141-161 (ILGWVAVLMTFFAGIFYMCAY) threads the bilayer. Residues 162–173 (RVHECRRLSTPR) lie on the Cytoplasmic side of the membrane. Residue S170 is modified to Phosphoserine. T171 bears the Phosphothreonine mark.

The protein belongs to the PMP-22/EMP/MP20 family. In terms of assembly, seems to be associated with itself or another lens membrane component via disulfide bonds. As to expression, eye lens specific.

Its subcellular location is the membrane. Present in the thicker 16-17 nm junctions of mammalian lens fiber cells, where it may contribute to cell junctional organization. Acts as a receptor for calmodulin. May play an important role in both lens development and cataractogenesis. This is Lens fiber membrane intrinsic protein (LIM2) from Homo sapiens (Human).